A 407-amino-acid chain; its full sequence is Phosphopentomutase (407 aa).

Mn(2+)-binding residues include Asp-10, Asp-306, His-311, Asp-347, His-348, and His-359.

The protein belongs to the phosphopentomutase family. The cofactor is Mn(2+).

It localises to the cytoplasm. The enzyme catalyses 2-deoxy-alpha-D-ribose 1-phosphate = 2-deoxy-D-ribose 5-phosphate. The catalysed reaction is alpha-D-ribose 1-phosphate = D-ribose 5-phosphate. The protein operates within carbohydrate degradation; 2-deoxy-D-ribose 1-phosphate degradation; D-glyceraldehyde 3-phosphate and acetaldehyde from 2-deoxy-alpha-D-ribose 1-phosphate: step 1/2. Isomerase that catalyzes the conversion of deoxy-ribose 1-phosphate (dRib-1-P) and ribose 1-phosphate (Rib-1-P) to deoxy-ribose 5-phosphate (dRib-5-P) and ribose 5-phosphate (Rib-5-P), respectively. The chain is Phosphopentomutase from Yersinia enterocolitica serotype O:8 / biotype 1B (strain NCTC 13174 / 8081).